A 322-amino-acid polypeptide reads, in one-letter code: Arginase-1 (322 aa).

The segment at 1 to 27 (MSFKSQSIGIIGAPFSKGQPRGGVEEG) is disordered. The residue at position 7 (Ser-7) is a Phosphoserine. Lys-17 is subject to N6-succinyllysine. Ser-72 is subject to Phosphoserine. An N6-succinyllysine modification is found at Lys-75. Residues His-101, Asp-124, His-126, and Asp-128 each contribute to the Mn(2+) site. Substrate-binding positions include 126 to 130 (HTDIN) and 137 to 139 (TGN). Ser-163 carries the phosphoserine modification. Asp-183 lines the substrate pocket. Position 217 is a phosphoserine (Ser-217). 2 residues coordinate Mn(2+): Asp-232 and Asp-234. Positions 246 and 277 each coordinate substrate.

It belongs to the arginase family. Homotrimer. Interacts with CMTM6. It depends on Mn(2+) as a cofactor.

Its subcellular location is the cytoplasm. It catalyses the reaction L-arginine + H2O = urea + L-ornithine. It participates in nitrogen metabolism; urea cycle; L-ornithine and urea from L-arginine: step 1/1. The chain is Arginase-1 (ARG1) from Sus scrofa (Pig).